The sequence spans 565 residues: Proline--tRNA ligase (565 aa).

It belongs to the class-II aminoacyl-tRNA synthetase family. ProS type 1 subfamily. Homodimer.

Its subcellular location is the cytoplasm. It carries out the reaction tRNA(Pro) + L-proline + ATP = L-prolyl-tRNA(Pro) + AMP + diphosphate. Functionally, catalyzes the attachment of proline to tRNA(Pro) in a two-step reaction: proline is first activated by ATP to form Pro-AMP and then transferred to the acceptor end of tRNA(Pro). As ProRS can inadvertently accommodate and process non-cognate amino acids such as alanine and cysteine, to avoid such errors it has two additional distinct editing activities against alanine. One activity is designated as 'pretransfer' editing and involves the tRNA(Pro)-independent hydrolysis of activated Ala-AMP. The other activity is designated 'posttransfer' editing and involves deacylation of mischarged Ala-tRNA(Pro). The misacylated Cys-tRNA(Pro) is not edited by ProRS. The chain is Proline--tRNA ligase from Bacillus pumilus (strain SAFR-032).